The following is a 196-amino-acid chain: Large ribosomal subunit protein bL25 (196 aa).

The protein belongs to the bacterial ribosomal protein bL25 family. CTC subfamily. As to quaternary structure, part of the 50S ribosomal subunit; part of the 5S rRNA/L5/L18/L25 subcomplex. Contacts the 5S rRNA. Binds to the 5S rRNA independently of L5 and L18.

Functionally, this is one of the proteins that binds to the 5S RNA in the ribosome where it forms part of the central protuberance. This chain is Large ribosomal subunit protein bL25, found in Amoebophilus asiaticus (strain 5a2).